The sequence spans 86 residues: Beta-mammal/insect toxin To1 (86 aa).

The signal sequence occupies residues 1–20; sequence MTRFVLFISCFFLIDMIVEC. One can recognise an LCN-type CS-alpha/beta domain in the interval 22 to 84; it reads KEGYLVGNDG…TWSSATNKCK (63 aa). 4 disulfides stabilise this stretch: Cys32/Cys83, Cys36/Cys58, Cys44/Cys64, and Cys48/Cys66. The residue at position 84 (Lys84) is a Lysine amide.

The protein belongs to the long (4 C-C) scorpion toxin superfamily. Sodium channel inhibitor family. Beta subfamily. As to expression, expressed by the venom gland.

The protein localises to the secreted. Functionally, beta toxin that show multiple effects. It enhances the open probability at more negative potentials of human Nav1.3/SCN3A and Nav1.6/SCN8A, of the insect channel BgNaV1 and of arachnid VdNaV1 channel. It promotes an important shift in slow inactivation processes as a function of the prepulse voltage in human Nav1.3/SCN3A and Nav1.6/SCN8A and a small shift in Nav1.1/SCN1A, Nav1.2/SCN2A and Nav1.4/SCN4A. Finally, it reduces the peak of sodium currents in Nav1.3/SCN3A (80% inhibition at 70 nM of toxin), Nav1.6/SCN8A (55.3%), Nav1.1/SCN1A (53.3%), Nav1.5/SCN5A (46.7%), Nav1.2/SCN2A (42.7%) and Nav1.4/SCN4A (20%) voltage-gated sodium channels. It has also been shown to affect the sodium current permeability of rat cerebellum granular cells in a partially reversible manner. In vivo, an intraperitoneal injection (20 ug) into mice produces excitability, respiratory problems, convulsions and death, within the first 30 minutes after injection. The chain is Beta-mammal/insect toxin To1 from Tityus obscurus (Amazonian scorpion).